Here is a 560-residue protein sequence, read N- to C-terminus: CTP synthase (560 aa).

The segment at 1-272 (MSIGDVCSAR…DTQILSHFGM (272 aa)) is amidoligase domain. Serine 20 provides a ligand contact to CTP. Position 20 (serine 20) interacts with UTP. Residues 21–26 (SLGKGL) and aspartate 78 contribute to the ATP site. Mg(2+)-binding residues include aspartate 78 and glutamate 146. Residues 153-155 (DIE), 193-198 (KTKPTQ), and lysine 229 contribute to the CTP site. UTP contacts are provided by residues 193-198 (KTKPTQ) and lysine 229. The Glutamine amidotransferase type-1 domain maps to 297–539 (TIAIIGKYTK…VQNVLQIKQR (243 aa)). Glycine 356 contacts L-glutamine. The active-site Nucleophile; for glutamine hydrolysis is cysteine 383. L-glutamine-binding positions include 384-387 (MGMQ), glutamate 407, and arginine 467. Residues histidine 512 and glutamate 514 contribute to the active site.

Belongs to the CTP synthase family. In terms of assembly, homotetramer.

The catalysed reaction is UTP + L-glutamine + ATP + H2O = CTP + L-glutamate + ADP + phosphate + 2 H(+). It carries out the reaction L-glutamine + H2O = L-glutamate + NH4(+). The enzyme catalyses UTP + NH4(+) + ATP = CTP + ADP + phosphate + 2 H(+). It participates in pyrimidine metabolism; CTP biosynthesis via de novo pathway; CTP from UDP: step 2/2. Its activity is regulated as follows. Allosterically activated by GTP, when glutamine is the substrate; GTP has no effect on the reaction when ammonia is the substrate. The allosteric effector GTP functions by stabilizing the protein conformation that binds the tetrahedral intermediate(s) formed during glutamine hydrolysis. Inhibited by the product CTP, via allosteric rather than competitive inhibition. Functionally, catalyzes the ATP-dependent amination of UTP to CTP with either L-glutamine or ammonia as the source of nitrogen. Regulates intracellular CTP levels through interactions with the four ribonucleotide triphosphates. This is CTP synthase from Anaplasma marginale (strain Florida).